The sequence spans 333 residues: Taste receptor type 2 member 38 (333 aa).

Topologically, residues 1–17 (MLTLTRICAVSYEVRST) are extracellular. The helical transmembrane segment at 18 to 38 (FLFISVLEFAVGFLTNAFIFL) threads the bilayer. The Cytoplasmic segment spans residues 39–55 (VNFWDVVKRQPLSNSDC). Residues 56–76 (VLLCLSISRLFLHGLLFLSAI) form a helical membrane-spanning segment. Residues 77 to 94 (QLTHFQKLSEPLNHSYQA) lie on the Extracellular side of the membrane. The chain crosses the membrane as a helical span at residues 95 to 115 (IIMLWIIANQANLWLAACLSL). Over 116-142 (LYCSKLIRFSHTFLICLASWVSRKISQ) the chain is Cytoplasmic. A helical membrane pass occupies residues 143–163 (MLLGIILCSCICTVLCVWCFF). The Extracellular portion of the chain corresponds to 164–190 (SRPHFTVTTFLFMNNNTRLNWQIKDLN). N-linked (GlcNAc...) asparagine glycosylation occurs at Asn178. A helical membrane pass occupies residues 191–211 (LFYSFLFCYLWSVPPFLLFLV). Residues 212-251 (SSGMLTVSLGRHMRTMKVYTRDSRDPSLEAHIKALKSLVS) lie on the Cytoplasmic side of the membrane. Residues 252 to 272 (FFCFFVISSCAAFISVPLLIL) traverse the membrane as a helical segment. At 273-276 (WRNK) the chain is on the extracellular side. A helical transmembrane segment spans residues 277–297 (IGVMVCVGIMAACPSGHAAVL). The Cytoplasmic segment spans residues 298-333 (ISGNATLRRAVTTILLWAQSSMKVRADHKADSRTLC).

The protein belongs to the G-protein coupled receptor T2R family.

The protein resides in the membrane. Receptor that may play a role in the perception of bitterness and is gustducin-linked. May play a role in sensing the chemical composition of the gastrointestinal content. The activity of this receptor may stimulate alpha gustducin, mediate PLC-beta-2 activation and lead to the gating of TRPM5. The polypeptide is Taste receptor type 2 member 38 (TAS2R38) (Pongo pygmaeus (Bornean orangutan)).